Here is a 305-residue protein sequence, read N- to C-terminus: Probable xyloglucan endotransglucosylase/hydrolase protein 8 (305 aa).

Positions 1–31 (METERRIITSCSAMTALFLFMTALMASSSIA) are cleaved as a signal peptide. One can recognise a GH16 domain in the interval 32 to 231 (ATPTQSFEDN…WKKAPFVSSY (200 aa)). Asn-61 and Asn-66 each carry an N-linked (GlcNAc...) asparagine glycan. The active-site Nucleophile is Glu-115. The active-site Proton donor is the Glu-119. Residue Glu-119 coordinates xyloglucan. Asn-123 carries N-linked (GlcNAc...) asparagine glycosylation. 132–134 (QTN) lines the xyloglucan pocket. Residue Asn-138 is glycosylated (N-linked (GlcNAc...) asparagine). Xyloglucan-binding positions include 142-144 (NRE), 210-211 (DW), and Gly-215. Intrachain disulfides connect Cys-239-Cys-248 and Cys-286-Cys-299. Residue Arg-291 coordinates xyloglucan.

This sequence belongs to the glycosyl hydrolase 16 family. XTH group 1 subfamily. Post-translationally, contains at least one intrachain disulfide bond essential for its enzymatic activity.

The protein localises to the secreted. Its subcellular location is the cell wall. The protein resides in the extracellular space. It localises to the apoplast. It carries out the reaction breaks a beta-(1-&gt;4) bond in the backbone of a xyloglucan and transfers the xyloglucanyl segment on to O-4 of the non-reducing terminal glucose residue of an acceptor, which can be a xyloglucan or an oligosaccharide of xyloglucan.. Its function is as follows. Catalyzes xyloglucan endohydrolysis (XEH) and/or endotransglycosylation (XET). Cleaves and religates xyloglucan polymers, an essential constituent of the primary cell wall, and thereby participates in cell wall construction of growing tissues. The chain is Probable xyloglucan endotransglucosylase/hydrolase protein 8 (XTH8) from Arabidopsis thaliana (Mouse-ear cress).